Here is a 325-residue protein sequence, read N- to C-terminus: Probable arylamine N-acetyltransferase 1 (325 aa).

The active-site Acyl-thioester intermediate is the Cys72. Catalysis depends on residues His112 and Asp127.

It belongs to the arylamine N-acetyltransferase family.

It catalyses the reaction an arylamine + acetyl-CoA = an N-acetylarylamine + CoA. The protein is Probable arylamine N-acetyltransferase 1 of Dictyostelium discoideum (Social amoeba).